The following is a 552-amino-acid chain: Polypeptide N-acetylgalactosaminyltransferase 14 (552 aa).

Residues 1 to 6 (MRRLTR) are Cytoplasmic-facing. The chain crosses the membrane as a helical; Signal-anchor for type II membrane protein span at residues 7 to 26 (RLVLPVFGVLWITVLLFFWV). Over 27–552 (TKRKLEVPTG…MSQHWDMVSS (526 aa)) the chain is Lumenal. Disulfide bonds link Cys-101-Cys-328, Cys-319-Cys-397, Cys-430-Cys-449, Cys-476-Cys-493, and Cys-517-Cys-538. The catalytic subdomain A stretch occupies residues 110–215 (LPPTSIIITF…RDWLQPLLHR (106 aa)). The substrate site is built by Asp-151 and Arg-176. Asp-199 provides a ligand contact to Mn(2+). Substrate is bound at residue Ser-200. Position 201 (His-201) interacts with Mn(2+). Positions 274–336 (PIRTPIIAGG…PCSRVGHVFR (63 aa)) are catalytic subdomain B. Position 305 (Trp-305) interacts with substrate. His-333 serves as a coordination point for Mn(2+). Residues Arg-336, His-339, and Tyr-341 each contribute to the substrate site. Positions 415–550 (KESSIQKGNI…SLMSQHWDMV (136 aa)) constitute a Ricin B-type lectin domain.

The protein belongs to the glycosyltransferase 2 family. GalNAc-T subfamily. It depends on Mn(2+) as a cofactor. Detected in renal tubules (at protein level). Highly expressed in fetal and adult kidney. Widely expressed at low level. Weakly expressed in whole brain, cerebellum, thymus, lung, mammary gland, liver, stomach, small intestine, colon, pancreas, spleen, bladder, uterus, placenta, testis, ovary, skeletal muscle, leukocyte, B-cell, bone marrow, fetal brain, fetal thymus, fetal lung, fetal liver, fetal small intestine, fetal spleen, fetal skeletal and fetus. Detected in renal tubules (at protein level).

Its subcellular location is the golgi apparatus membrane. The enzyme catalyses L-seryl-[protein] + UDP-N-acetyl-alpha-D-galactosamine = a 3-O-[N-acetyl-alpha-D-galactosaminyl]-L-seryl-[protein] + UDP + H(+). It carries out the reaction L-threonyl-[protein] + UDP-N-acetyl-alpha-D-galactosamine = a 3-O-[N-acetyl-alpha-D-galactosaminyl]-L-threonyl-[protein] + UDP + H(+). It participates in protein modification; protein glycosylation. Catalyzes the initial reaction in O-linked oligosaccharide biosynthesis, the transfer of an N-acetyl-D-galactosamine residue to a serine or threonine residue on the protein receptor. Displays activity toward mucin-derived peptide substrates such as Muc2, Muc5AC, Muc7, and Muc13 (-58). May be involved in O-glycosylation in kidney. The protein is Polypeptide N-acetylgalactosaminyltransferase 14 (GALNT14) of Homo sapiens (Human).